Here is a 550-residue protein sequence, read N- to C-terminus: Acetyl-coenzyme A transporter 1 (550 aa).

Composition is skewed to basic and acidic residues over residues 1–12 and 36–52; these read MSPTISHKDSSR and DDSR…REVL. The interval 1–58 is disordered; it reads MSPTISHKDSSRQRRSGMFSHALDMKSGPLPPGGWDDSRRDSVGGEGDREVLLGDAGP. Over 1–74 the chain is Cytoplasmic; sequence MSPTISHKDS…PRSYRSELSS (74 aa). The residue at position 42 (Ser42) is a Phosphoserine. Residues 75-95 traverse the membrane as a helical segment; it reads ILLLLFLYVLQGIPLGLAGSI. Over 96–113 the chain is Extracellular; the sequence is PLILQSKNVSYTDQAFFS. N-linked (GlcNAc...) asparagine glycosylation is present at Asn103. Residues 114 to 134 form a helical membrane-spanning segment; the sequence is FVFWPFSLKLLWAPLVDAVYF. At 135-141 the chain is on the cytoplasmic side; the sequence is KNFGRRK. Residues 142 to 162 traverse the membrane as a helical segment; it reads SWLVPTQYTLGIFMIYLSTQV. Residues 163–175 lie on the Extracellular side of the membrane; the sequence is DRLLGNIDGRTPD. Residues 176 to 196 traverse the membrane as a helical segment; sequence VVALTVTFFLFEFLAATQDIA. Over 197 to 217 the chain is Cytoplasmic; sequence VDGWALTMLSRENVGYASTCN. The chain crosses the membrane as a helical span at residues 218-238; that stretch reads SVGQTAGYFLGNVLFLALESA. The Extracellular portion of the chain corresponds to 239–256; it reads DFCNKYLRFQPQPRGIVT. A helical transmembrane segment spans residues 257–277; it reads LSDFLFFWGTVFLITTTLVAL. Over 278–300 the chain is Cytoplasmic; it reads LKKENREASIVKEETQGITDTYK. Residues 301-321 form a helical membrane-spanning segment; sequence LLFSIIKMPAVLAFCLLILTS. Topologically, residues 322–344 are extracellular; it reads KIGFSAADAVTGLKLVEEGVPKE. Residues 345 to 365 traverse the membrane as a helical segment; sequence HLALLAVPMVPLQIILPLLIS. The Cytoplasmic segment spans residues 366–375; it reads KYTAGPQPLN. The helical transmembrane segment at 376–396 threads the bilayer; sequence IFYKAMPYRLLLGLEYALLVW. Residues 397–405 are Extracellular-facing; it reads WTPKVEHQG. The chain crosses the membrane as a helical span at residues 406 to 426; the sequence is GFPLYYYIIVLLSYALHQVTL. At 427–509 the chain is on the cytoplasmic side; the sequence is YSMYVSIMAF…LGGSCVTALD (83 aa). A helical membrane pass occupies residues 510 to 530; it reads GYYVESIICVLIGFGWWFFLG. At 531–550 the chain is on the extracellular side; that stretch reads PKFKKLQDEGPSSWKCKRNN.

Belongs to the SLC33A transporter family. Homodimerizes. Expressed in all adult tissues examined including brain, heart, kidney, liver and spleen, with maximum expression in liver and kidney.

Its subcellular location is the endoplasmic reticulum membrane. The enzyme catalyses acetyl-CoA(in) = acetyl-CoA(out). In terms of biological role, acetyl-CoA transporter that mediates active acetyl-CoA import through the endoplasmic reticulum (ER) membrane into the ER lumen where specific ER-based acetyl-CoA:lysine acetyltransferases are responsible for the acetylation of ER-based protein substrate, such as BACE1. Necessary for O-acetylation of gangliosides. This chain is Acetyl-coenzyme A transporter 1 (Slc33a1), found in Mus musculus (Mouse).